The following is a 345-amino-acid chain: Ryncolin-1 (345 aa).

Residues 1–19 form the signal peptide; it reads MKPWAAFHLIFLVASSLEG. Positions 48–118 are disordered; it reads ILQSQPGIPG…DKGDKGEDCN (71 aa). Residues 57–114 form the Collagen-like domain; the sequence is GIPGVPGTNGSEGLKGDPGPQGPPGIRGPDGIRGEAGPKGDKGDQGDKGDKGDKGDKG. A compositionally biased stretch (basic and acidic residues) spans 86–116; the sequence is DGIRGEAGPKGDKGDQGDKGDKGDKGDKGED. The Fibrinogen C-terminal domain maps to 121 to 339; that stretch reads GCLPTEVRNC…YADMKIRPQQ (219 aa). Intrachain disulfides connect cysteine 130/cysteine 158 and cysteine 282/cysteine 295.

This sequence belongs to the ficolin lectin family. Veficolin subfamily. Hydroxylated, possibly at Pro-80. Expressed by the venom duct.

The protein resides in the secreted. Initiates complement activation and/or interferes in platelet aggregation and/or blood coagulation. In Cerberus rynchops (Dog-faced water snake), this protein is Ryncolin-1.